The sequence spans 351 residues: Serine protease inhibitor dipetalogastin (351 aa).

The propeptide occupies 1–131 (LIKELVNMVI…AETTNAMEVL (131 aa)). 6 consecutive Kazal-like domains span residues 19-69 (KELK…PCDE), 72-122 (HDFE…ECHA), 131-181 (LFQG…PCDE), 184-234 (HDFE…ECHP), 240-289 (QLIL…ECKV), and 297-347 (GEVR…RCLP). 18 disulfides stabilise this stretch: Cys-25/Cys-50, Cys-27/Cys-46, Cys-35/Cys-67, Cys-78/Cys-103, Cys-80/Cys-99, Cys-88/Cys-120, Cys-137/Cys-162, Cys-139/Cys-158, Cys-147/Cys-179, Cys-190/Cys-215, Cys-192/Cys-211, Cys-200/Cys-232, Cys-246/Cys-271, Cys-248/Cys-267, Cys-256/Cys-287, Cys-303/Cys-328, Cys-305/Cys-324, and Cys-313/Cys-345.

It is found in the secreted. In terms of biological role, thrombin inhibitor. Prevents blood clotting to allow insect to feed on blood. Also functions as an inhibitor of trypsin and plasmin. The polypeptide is Serine protease inhibitor dipetalogastin (Dipetalogaster maximus (Blood-sucking bug)).